Consider the following 70-residue polypeptide: Large ribosomal subunit protein eL24 (70 aa).

Cys-7, Cys-10, Cys-33, and Cys-37 together coordinate Zn(2+). The C4-type zinc-finger motif lies at 7-37; the sequence is CSFCGYEIEPGKGKMVVEKDGTVLYFCSSKC.

This sequence belongs to the eukaryotic ribosomal protein eL24 family. As to quaternary structure, part of the 50S ribosomal subunit. Forms a cluster with proteins L3 and L14. Zn(2+) is required as a cofactor.

Its function is as follows. Binds to the 23S rRNA. The protein is Large ribosomal subunit protein eL24 of Methanocaldococcus jannaschii (strain ATCC 43067 / DSM 2661 / JAL-1 / JCM 10045 / NBRC 100440) (Methanococcus jannaschii).